The chain runs to 458 residues: MTREIKPLFGTDGVRGRANHEPMTVEMSVLLGKAVAGVLQECKPGRHRVVVGKDTRLSGYMFENALIAGLTSMGIETLVLGPIPTPGVAFITRAYRADAGIMISASHNPYWDNGIKIFSSEGFKISDVIERRIEQMVAFKEFGNLPEDYAVGKNKRVVDAMGRYIEFAKATFPRGRTLNGLKIVLDCAHGAAYKVAPSVFEELDAEVICYGCEPTGSNINDNCGALFPSVIQKAVIEHKADVGIALDGDGDRIIMVNEKGHIVDGDMILSICANDLKKKGILHGNRIVATVMTNFGVLKYLENVGIDTLISPVGDRHVLQNMLEYEANLGGEQSGHMIFLDYNTTGDGIVSALQVLRIMIESESTLSDLTSPIVKSPQALINVAVKEKIPLDTLPLVQEALRDVRSSLGDSGRVLLRYSGTENICRVMVEGLKKHQVDSLAKTIADIVDSELGVGIIE.

Ser-106 acts as the Phosphoserine intermediate in catalysis. Ser-106, Asp-247, Asp-249, and Asp-251 together coordinate Mg(2+). Ser-106 bears the Phosphoserine mark.

The protein belongs to the phosphohexose mutase family. Mg(2+) is required as a cofactor. Activated by phosphorylation.

The enzyme catalyses alpha-D-glucosamine 1-phosphate = D-glucosamine 6-phosphate. Functionally, catalyzes the conversion of glucosamine-6-phosphate to glucosamine-1-phosphate. This is Phosphoglucosamine mutase from Chlamydia felis (strain Fe/C-56) (Chlamydophila felis).